A 459-amino-acid polypeptide reads, in one-letter code: Inositol-trisphosphate 3-kinase A (459 aa).

A disordered region spans residues 1 to 26; it reads MTLPGHPTGMARPRGAGPCSPGLERA. Arg-35, Arg-55, and Arg-62 each carry omega-N-methylarginine. The tract at residues 49–164 is disordered; it reads AAAGEPRARG…TSEDVGQKSH (116 aa). Residues 116-132 show a composition bias toward low complexity; that stretch reads RRLSTSSLSSTGSSSLL. A phosphoserine mark is found at Ser-135 and Ser-195. Residues Ser-195, Lys-207, 247–249, and Asp-260 each bind ATP; that span reads QDL. Substrate contacts are provided by Lys-262 and Arg-283. The segment at 285 to 293 is calmodulin-binding; sequence DMYKKMLAV. A substrate-binding site is contributed by 310–317; it reads KPRYMQWR. Residues Lys-334 and Asp-414 each contribute to the ATP site. Lys-417 lines the substrate pocket.

Belongs to the inositol phosphokinase (IPK) family.

The protein resides in the cytoplasm. Its subcellular location is the cytoskeleton. It catalyses the reaction 1D-myo-inositol 1,4,5-trisphosphate + ATP = 1D-myo-inositol 1,3,4,5-tetrakisphosphate + ADP + H(+). With respect to regulation, activated by calcium/calmodulin. Functionally, catalyzes the phosphorylation of 1D-myo-inositol 1,4,5-trisphosphate (InsP3) into 1D-myo-inositol 1,3,4,5-tetrakisphosphate and participates to the regulation of calcium homeostasis. The protein is Inositol-trisphosphate 3-kinase A of Rattus norvegicus (Rat).